Here is a 365-residue protein sequence, read N- to C-terminus: tRNA/tmRNA (uracil-C(5))-methyltransferase (365 aa).

S-adenosyl-L-methionine-binding residues include Gln189, Tyr217, Asn222, Glu238, and Asp298. Residue Cys323 is the Nucleophile of the active site. The Proton acceptor role is filled by Glu357.

It belongs to the class I-like SAM-binding methyltransferase superfamily. RNA M5U methyltransferase family. TrmA subfamily.

The catalysed reaction is uridine(54) in tRNA + S-adenosyl-L-methionine = 5-methyluridine(54) in tRNA + S-adenosyl-L-homocysteine + H(+). The enzyme catalyses uridine(341) in tmRNA + S-adenosyl-L-methionine = 5-methyluridine(341) in tmRNA + S-adenosyl-L-homocysteine + H(+). Dual-specificity methyltransferase that catalyzes the formation of 5-methyluridine at position 54 (m5U54) in all tRNAs, and that of position 341 (m5U341) in tmRNA (transfer-mRNA). The sequence is that of tRNA/tmRNA (uracil-C(5))-methyltransferase from Proteus mirabilis (strain HI4320).